Reading from the N-terminus, the 520-residue chain is Alpha-1B adrenergic receptor (520 aa).

Residues 1–45 (MNPDLDTGHNTSAPAHWGELKNANFTGPNQTSSNSTLPQLDITRA) lie on the Extracellular side of the membrane. N10, N24, N29, and N34 each carry an N-linked (GlcNAc...) asparagine glycan. A helical membrane pass occupies residues 46–70 (ISVGLVLGAFILFAIVGNILVILSV). Over 71–83 (ACNRHLRTPTNYF) the chain is Cytoplasmic. The chain crosses the membrane as a helical span at residues 84-105 (IVNLAMADLLLSFTVLPFSAAL). Over 106–115 (EVLGYWVLGR) the chain is Extracellular. Residues 116-141 (IFCDIWAAVDVLCCTASILSLCAISI) form a helical membrane-spanning segment. Residues C118 and C195 are joined by a disulfide bond. Residues 142–161 (DRYIGVRYSLQYPTLVTRRK) are Cytoplasmic-facing. Residues 162–184 (AILALLSVWVLSTVISIGPLLGW) form a helical membrane-spanning segment. Residues 185–201 (KEPAPNDDKECGVTEEP) lie on the Extracellular side of the membrane. The chain crosses the membrane as a helical span at residues 202-224 (FYALFSSLGSFYIPLAVILVMYC). Over 225-295 (RVYIVAKRTT…FSREKKAAKT (71 aa)) the chain is Cytoplasmic. Phosphothreonine is present on T264. The helical transmembrane segment at 296–319 (LGIVVGMFILCWLPFFIALPLGSL) threads the bilayer. Residues 320-326 (FSTLKPP) lie on the Extracellular side of the membrane. A helical membrane pass occupies residues 327-351 (DAVFKVVFWLGYFNSCLNPIIYPCS). Over 352–520 (SKEFKRAFVR…SNMPLAPGQF (169 aa)) the chain is Cytoplasmic. C365 carries the S-palmitoyl cysteine lipid modification. The Nuclear localization signal motif lies at 368–380 (RGRGRRRRRRRRR). 2 disordered regions span residues 394 to 432 (GGSL…GYLG) and 479 to 520 (LTEP…PGQF).

Belongs to the G-protein coupled receptor 1 family. Adrenergic receptor subfamily. ADRA1B sub-subfamily. In terms of assembly, homo- and heterooligomer. Heterooligomerizes with ADRA1B homooligomers in cardiac myocytes. Interacts with CAVIN4.

The protein localises to the nucleus membrane. It is found in the cell membrane. The protein resides in the cytoplasm. It localises to the membrane. Its subcellular location is the caveola. This alpha-adrenergic receptor mediates its action by association with G proteins that activate a phosphatidylinositol-calcium second messenger system. Its effect is mediated by G(q) and G(11) proteins. Nuclear ADRA1A-ADRA1B heterooligomers regulate phenylephrine (PE)-stimulated ERK signaling in cardiac myocytes. This Homo sapiens (Human) protein is Alpha-1B adrenergic receptor (ADRA1B).